The primary structure comprises 470 residues: UDP-N-acetylmuramoylalanine--D-glutamate ligase (470 aa).

An ATP-binding site is contributed by 121 to 127 (GTNGKST).

The protein belongs to the MurCDEF family.

The protein localises to the cytoplasm. It carries out the reaction UDP-N-acetyl-alpha-D-muramoyl-L-alanine + D-glutamate + ATP = UDP-N-acetyl-alpha-D-muramoyl-L-alanyl-D-glutamate + ADP + phosphate + H(+). It functions in the pathway cell wall biogenesis; peptidoglycan biosynthesis. Functionally, cell wall formation. Catalyzes the addition of glutamate to the nucleotide precursor UDP-N-acetylmuramoyl-L-alanine (UMA). In Rhizobium etli (strain ATCC 51251 / DSM 11541 / JCM 21823 / NBRC 15573 / CFN 42), this protein is UDP-N-acetylmuramoylalanine--D-glutamate ligase.